Reading from the N-terminus, the 183-residue chain is ATP synthase subunit delta (183 aa).

It belongs to the ATPase delta chain family. As to quaternary structure, F-type ATPases have 2 components, F(1) - the catalytic core - and F(0) - the membrane proton channel. F(1) has five subunits: alpha(3), beta(3), gamma(1), delta(1), epsilon(1). F(0) has three main subunits: a(1), b(2) and c(10-14). The alpha and beta chains form an alternating ring which encloses part of the gamma chain. F(1) is attached to F(0) by a central stalk formed by the gamma and epsilon chains, while a peripheral stalk is formed by the delta and b chains.

The protein localises to the cell inner membrane. In terms of biological role, f(1)F(0) ATP synthase produces ATP from ADP in the presence of a proton or sodium gradient. F-type ATPases consist of two structural domains, F(1) containing the extramembraneous catalytic core and F(0) containing the membrane proton channel, linked together by a central stalk and a peripheral stalk. During catalysis, ATP synthesis in the catalytic domain of F(1) is coupled via a rotary mechanism of the central stalk subunits to proton translocation. Its function is as follows. This protein is part of the stalk that links CF(0) to CF(1). It either transmits conformational changes from CF(0) to CF(1) or is implicated in proton conduction. This is ATP synthase subunit delta from Thermosipho africanus (strain TCF52B).